The following is a 550-amino-acid chain: Formate--tetrahydrofolate ligase (550 aa).

Thr-62–Ser-69 is a binding site for ATP.

This sequence belongs to the formate--tetrahydrofolate ligase family.

The enzyme catalyses (6S)-5,6,7,8-tetrahydrofolate + formate + ATP = (6R)-10-formyltetrahydrofolate + ADP + phosphate. The protein operates within one-carbon metabolism; tetrahydrofolate interconversion. This chain is Formate--tetrahydrofolate ligase, found in Corynebacterium diphtheriae (strain ATCC 700971 / NCTC 13129 / Biotype gravis).